The following is a 599-amino-acid chain: MAAAPWLYLSRRRSSTQTSLRRFLICSSSFDADEFISSQSRVIGGRGEEEVRFSGALFSRMIHSSTYHPYRQIPLPHSSVQLLDASLGCRGFSSGSSNVSDGCDEEVESECDNDEETGVSCVESSTNPEEVERVCKVIDELFALDRNMEAVLDEMKLDLSHDLIVEVLERFRHARKPAFRFFCWAAERQGFAHASRTYNSMMSILAKTRQFETMVSVLEEMGTKGLLTMETFTIAMKAFAAAKERKKAVGIFELMKKYKFKIGVETINCLLDSLGRAKLGKEAQVLFDKLKERFTPNMMTYTVLLNGWCRVRNLIEAARIWNDMIDHGLKPDIVAHNVMLEGLLRSMKKSDAIKLFHVMKSKGPCPNVRSYTIMIRDFCKQSSMETAIEYFDDMVDSGLQPDAAVYTCLITGFGTQKKLDTVYELLKEMQEKGHPPDGKTYNALIKLMANQKMPEHGTRIYNKMIQNEIEPSIHTFNMIMKSYFVARNYEMGRAVWDEMIKKGICPDDNSYTVLIRGLISEGKSREACRYLEEMLDKGMKTPLIDYNKFAADFHRGGQPEIFEELAQRAKFSGKFAAAEIFARWAQMTRRRCKQRFMED.

The transit peptide at 1–99 (MAAAPWLYLS…RGFSSGSSNV (99 aa)) directs the protein to the mitochondrion. PPR repeat units follow at residues 194–228 (ASRTYNSMMSILAKTRQFETMVSVLEEMGTKGLLT), 230–262 (ETFTIAMKAFAAAKERKKAVGIFELMKKYKFKI), 263–293 (GVETINCLLDSLGRAKLGKEAQVLFDKLKER), 297–331 (NMMTYTVLLNGWCRVRNLIEAARIWNDMIDHGLKP), 332–366 (DIVAHNVMLEGLLRSMKKSDAIKLFHVMKSKGPCP), 367–401 (NVRSYTIMIRDFCKQSSMETAIEYFDDMVDSGLQP), 402–436 (DAAVYTCLITGFGTQKKLDTVYELLKEMQEKGHPP), 437–471 (DGKTYNALIKLMANQKMPEHGTRIYNKMIQNEIEP), 472–506 (SIHTFNMIMKSYFVARNYEMGRAVWDEMIKKGICP), and 507–541 (DDNSYTVLIRGLISEGKSREACRYLEEMLDKGMKT).

Belongs to the PPR family. P subfamily.

It localises to the mitochondrion. The protein is Pentatricopeptide repeat-containing protein At3g62540, mitochondrial of Arabidopsis thaliana (Mouse-ear cress).